The sequence spans 473 residues: Sulfate adenylyltransferase subunit 1 (473 aa).

The tr-type G domain maps to lysine 19–glutamate 238. Positions glycine 28 to serine 35 are G1. Residue glycine 28 to serine 35 coordinates GTP. The interval glycine 86–aspartate 90 is G2. The segment at aspartate 107 to glycine 110 is G3. GTP-binding positions include aspartate 107–histidine 111 and asparagine 162–aspartate 165. Residues asparagine 162 to aspartate 165 are G4. The segment at serine 200–leucine 202 is G5.

The protein belongs to the TRAFAC class translation factor GTPase superfamily. Classic translation factor GTPase family. CysN/NodQ subfamily. As to quaternary structure, heterodimer composed of CysD, the smaller subunit, and CysN.

The catalysed reaction is sulfate + ATP + H(+) = adenosine 5'-phosphosulfate + diphosphate. It functions in the pathway sulfur metabolism; hydrogen sulfide biosynthesis; sulfite from sulfate: step 1/3. Functionally, with CysD forms the ATP sulfurylase (ATPS) that catalyzes the adenylation of sulfate producing adenosine 5'-phosphosulfate (APS) and diphosphate, the first enzymatic step in sulfur assimilation pathway. APS synthesis involves the formation of a high-energy phosphoric-sulfuric acid anhydride bond driven by GTP hydrolysis by CysN coupled to ATP hydrolysis by CysD. The polypeptide is Sulfate adenylyltransferase subunit 1 (Buchnera aphidicola subsp. Acyrthosiphon pisum (strain 5A)).